A 217-amino-acid polypeptide reads, in one-letter code: Probable transaldolase (217 aa).

Catalysis depends on lysine 83, which acts as the Schiff-base intermediate with substrate.

This sequence belongs to the transaldolase family. Type 3B subfamily.

The protein localises to the cytoplasm. The catalysed reaction is D-sedoheptulose 7-phosphate + D-glyceraldehyde 3-phosphate = D-erythrose 4-phosphate + beta-D-fructose 6-phosphate. The protein operates within carbohydrate degradation; pentose phosphate pathway; D-glyceraldehyde 3-phosphate and beta-D-fructose 6-phosphate from D-ribose 5-phosphate and D-xylulose 5-phosphate (non-oxidative stage): step 2/3. Its function is as follows. Transaldolase is important for the balance of metabolites in the pentose-phosphate pathway. The sequence is that of Probable transaldolase (tal) from Methanocaldococcus jannaschii (strain ATCC 43067 / DSM 2661 / JAL-1 / JCM 10045 / NBRC 100440) (Methanococcus jannaschii).